The sequence spans 911 residues: Valine--tRNA ligase (911 aa).

A 'HIGH' region motif is present at residues 53–63 (PNVTGTLHLGH). Positions 533-537 (KMSKS) match the 'KMSKS' region motif. Residue lysine 536 participates in ATP binding. Residues 845-910 (KEIERLTKEL…NRLAMLRSMQ (66 aa)) are a coiled coil.

It belongs to the class-I aminoacyl-tRNA synthetase family. ValS type 1 subfamily. In terms of assembly, monomer.

Its subcellular location is the cytoplasm. It carries out the reaction tRNA(Val) + L-valine + ATP = L-valyl-tRNA(Val) + AMP + diphosphate. Its function is as follows. Catalyzes the attachment of valine to tRNA(Val). As ValRS can inadvertently accommodate and process structurally similar amino acids such as threonine, to avoid such errors, it has a 'posttransfer' editing activity that hydrolyzes mischarged Thr-tRNA(Val) in a tRNA-dependent manner. The protein is Valine--tRNA ligase of Symbiobacterium thermophilum (strain DSM 24528 / JCM 14929 / IAM 14863 / T).